The following is a 173-amino-acid chain: RNA polymerase sigma factor TcsR (173 aa).

A sigma-70 factor domain-4 region spans residues 122-169; it reads IKDLTQNEKNILRKIYLHGLRESEISRELNISRQAVNKTHLRALEKLK. A DNA-binding region (H-T-H motif) is located at residues 143 to 162; sequence ESEISRELNISRQAVNKTHL.

The protein belongs to the sigma-70 factor family.

Sigma factors are initiation factors that promote the attachment of RNA polymerase to specific initiation sites and are then released. Transcriptional regulator specifically required to activate expression of the toxin gene locus, composed of tcsL and tcdE/utxA. This is RNA polymerase sigma factor TcsR from Paraclostridium sordellii (Clostridium sordellii).